The sequence spans 547 residues: Chaperonin GroEL (547 aa).

Residues 30 to 33 (TLGP), K51, 87 to 91 (DGTTT), G415, and D496 contribute to the ATP site. Residues 528 to 547 (DKSDMPAMPPGGMGGMGGMY) are disordered. Residues 538–547 (GGMGGMGGMY) are compositionally biased toward gly residues.

It belongs to the chaperonin (HSP60) family. In terms of assembly, forms a cylinder of 14 subunits composed of two heptameric rings stacked back-to-back. Interacts with the co-chaperonin GroES.

It localises to the cytoplasm. It carries out the reaction ATP + H2O + a folded polypeptide = ADP + phosphate + an unfolded polypeptide.. In terms of biological role, together with its co-chaperonin GroES, plays an essential role in assisting protein folding. The GroEL-GroES system forms a nano-cage that allows encapsulation of the non-native substrate proteins and provides a physical environment optimized to promote and accelerate protein folding. This is Chaperonin GroEL from Chlorobium luteolum (strain DSM 273 / BCRC 81028 / 2530) (Pelodictyon luteolum).